The primary structure comprises 266 residues: MAKQMFRALVALLLTLPVWLYAAPRVITLSPANTELAFAAGITPVGVSSYSDYPPEAQKIEQVSTWQGMNLERIVALKPDLVVAWRGGNAERQVNQLTSLGIKVMWVDAVSIEQIADALRQLAVWSPQPEKAQQAAQTLLNEYAALKVEYAGKAKKRVFLQFGMNPLFTSGKGSIQHQVLTTCGGENIFADSRVPWPQVSREQVLARHPQAIIVAGKAGEILKIEQYWGNLLKIPVIPLNSDWFERASPRIILAAKQLCNALSQVN.

The first 22 residues, 1–22 (MAKQMFRALVALLLTLPVWLYA), serve as a signal peptide directing secretion. The 242-residue stretch at 25–266 (RVITLSPANT…QLCNALSQVN (242 aa)) folds into the Fe/B12 periplasmic-binding domain. Cyanocob(III)alamin contacts are provided by residues tyrosine 50 and 242–246 (DWFER). Cysteine 183 and cysteine 259 form a disulfide bridge.

It belongs to the BtuF family. As to quaternary structure, the complex is composed of two ATP-binding proteins (BtuD), two transmembrane proteins (BtuC) and a solute-binding protein (BtuF).

It is found in the periplasm. Functionally, part of the ABC transporter complex BtuCDF involved in vitamin B12 import. Binds vitamin B12 and delivers it to the periplasmic surface of BtuC. The polypeptide is Vitamin B12-binding protein (Salmonella paratyphi A (strain ATCC 9150 / SARB42)).